Consider the following 118-residue polypeptide: UPF0342 protein BPUM_0928 (118 aa).

It belongs to the UPF0342 family.

This Bacillus pumilus (strain SAFR-032) protein is UPF0342 protein BPUM_0928.